We begin with the raw amino-acid sequence, 164 residues long: UBA-like domain-containing protein 2 (164 aa).

The residue at position 2 (serine 2) is an N-acetylserine. Residues 128–164 are disordered; the sequence is SSPTTFHHLHRPQPTWPPGAQQGGAQQKAMAAMDGQR. Residues 146–164 show a composition bias toward low complexity; that stretch reads GAQQGGAQQKAMAAMDGQR.

It belongs to the UBALD family.

In Homo sapiens (Human), this protein is UBA-like domain-containing protein 2 (UBALD2).